The chain runs to 474 residues: tRNA-2-methylthio-N(6)-dimethylallyladenosine synthase (474 aa).

Positions 3–120 (KKLHIKTWGC…LPDMIEQVRR (118 aa)) constitute an MTTase N-terminal domain. [4Fe-4S] cluster is bound by residues Cys-12, Cys-49, Cys-83, Cys-157, Cys-161, and Cys-164. The Radical SAM core domain occupies 143–375 (RAEGPTAFVS…QDRITQQAMR (233 aa)). One can recognise a TRAM domain in the interval 378 to 441 (RHMMGTVQRI…TNSLRGKFIR (64 aa)).

Belongs to the methylthiotransferase family. MiaB subfamily. As to quaternary structure, monomer. [4Fe-4S] cluster serves as cofactor.

The protein localises to the cytoplasm. The catalysed reaction is N(6)-dimethylallyladenosine(37) in tRNA + (sulfur carrier)-SH + AH2 + 2 S-adenosyl-L-methionine = 2-methylsulfanyl-N(6)-dimethylallyladenosine(37) in tRNA + (sulfur carrier)-H + 5'-deoxyadenosine + L-methionine + A + S-adenosyl-L-homocysteine + 2 H(+). Its function is as follows. Catalyzes the methylthiolation of N6-(dimethylallyl)adenosine (i(6)A), leading to the formation of 2-methylthio-N6-(dimethylallyl)adenosine (ms(2)i(6)A) at position 37 in tRNAs that read codons beginning with uridine. This chain is tRNA-2-methylthio-N(6)-dimethylallyladenosine synthase, found in Shewanella sp. (strain W3-18-1).